The sequence spans 132 residues: Small ribosomal subunit protein uS8 (132 aa).

The protein belongs to the universal ribosomal protein uS8 family. In terms of assembly, part of the 30S ribosomal subunit. Contacts proteins S5 and S12.

One of the primary rRNA binding proteins, it binds directly to 16S rRNA central domain where it helps coordinate assembly of the platform of the 30S subunit. This Rickettsia massiliae (strain Mtu5) protein is Small ribosomal subunit protein uS8.